Here is a 643-residue protein sequence, read N- to C-terminus: Long-chain fatty acid transport protein 4 (643 aa).

2 helical membrane passes run 20–42 (LPWT…WRFI) and 139–156 (FVGL…AALI). 243–254 (YIYTSGTTGLPK) is an AMP binding site.

Belongs to the ATP-dependent AMP-binding enzyme family. As to expression, expressed at highest levels in brain, testis, colon and kidney. Expressed at medium levels in heart and liver, small intestine and stomach. Expressed at low levels in peripheral leukocytes, bone marrow, skeletal muscle and aorta. Expressed in adipose tissue. Expressed in brain gray matter.

The protein localises to the endoplasmic reticulum membrane. It carries out the reaction a fatty acid(in) = a fatty acid(out). It catalyses the reaction (9Z,12Z)-octadecadienoate(out) = (9Z,12Z)-octadecadienoate(in). The enzyme catalyses (9Z)-octadecenoate(out) = (9Z)-octadecenoate(in). The catalysed reaction is hexadecanoate(out) = hexadecanoate(in). It carries out the reaction a long-chain fatty acid + ATP + CoA = a long-chain fatty acyl-CoA + AMP + diphosphate. It catalyses the reaction hexadecanoate + ATP + CoA = hexadecanoyl-CoA + AMP + diphosphate. The enzyme catalyses (E)-hexadec-2-enoate + ATP + CoA = (2E)-hexadecenoyl-CoA + AMP + diphosphate. The catalysed reaction is (9Z)-octadecenoate + ATP + CoA = (9Z)-octadecenoyl-CoA + AMP + diphosphate. It carries out the reaction (5Z,8Z,11Z,14Z)-eicosatetraenoate + ATP + CoA = (5Z,8Z,11Z,14Z)-eicosatetraenoyl-CoA + AMP + diphosphate. It catalyses the reaction a very long-chain fatty acid + ATP + CoA = a very long-chain fatty acyl-CoA + AMP + diphosphate. The enzyme catalyses tetracosanoate + ATP + CoA = tetracosanoyl-CoA + AMP + diphosphate. In terms of biological role, mediates the levels of long-chain fatty acids (LCFA) in the cell by facilitating their transport across cell membranes. Appears to be the principal fatty acid transporter in small intestinal enterocytes. Also functions as an acyl-CoA ligase catalyzing the ATP-dependent formation of fatty acyl-CoA using LCFA and very-long-chain fatty acids (VLCFA) as substrates, which prevents fatty acid efflux from cells and might drive more fatty acid uptake. Plays a role in the formation of the epidermal barrier. Required for fat absorption in early embryogenesis. Probably involved in fatty acid transport across the blood barrier. Indirectly inhibits RPE65 via substrate competition and via production of VLCFA derivatives like lignoceroyl-CoA. Prevents light-induced degeneration of rods and cones. The chain is Long-chain fatty acid transport protein 4 from Homo sapiens (Human).